The sequence spans 183 residues: Putative 3-methyladenine DNA glycosylase (183 aa).

This sequence belongs to the DNA glycosylase MPG family.

The sequence is that of Putative 3-methyladenine DNA glycosylase from Wolbachia pipientis subsp. Culex pipiens (strain wPip).